The following is a 293-amino-acid chain: tRNA pseudouridine synthase B (293 aa).

D40 acts as the Nucleophile in catalysis.

It belongs to the pseudouridine synthase TruB family. Type 1 subfamily.

It carries out the reaction uridine(55) in tRNA = pseudouridine(55) in tRNA. Responsible for synthesis of pseudouridine from uracil-55 in the psi GC loop of transfer RNAs. In Mycolicibacterium paratuberculosis (strain ATCC BAA-968 / K-10) (Mycobacterium paratuberculosis), this protein is tRNA pseudouridine synthase B.